We begin with the raw amino-acid sequence, 366 residues long: Dual-specificity RNA methyltransferase RlmN (366 aa).

Residue Glu102 is the Proton acceptor of the active site. The Radical SAM core domain occupies 108–340; it reads DEGRNTLCVS…TTTRKTRGRD (233 aa). The cysteines at positions 115 and 345 are disulfide-linked. Cys122, Cys126, and Cys129 together coordinate [4Fe-4S] cluster. S-adenosyl-L-methionine is bound by residues 171–172, Ser203, 225–227, and Asn302; these read GE and SLH. The active-site S-methylcysteine intermediate is Cys345.

The protein belongs to the radical SAM superfamily. RlmN family. Requires [4Fe-4S] cluster as cofactor.

It is found in the cytoplasm. The catalysed reaction is adenosine(2503) in 23S rRNA + 2 reduced [2Fe-2S]-[ferredoxin] + 2 S-adenosyl-L-methionine = 2-methyladenosine(2503) in 23S rRNA + 5'-deoxyadenosine + L-methionine + 2 oxidized [2Fe-2S]-[ferredoxin] + S-adenosyl-L-homocysteine. It catalyses the reaction adenosine(37) in tRNA + 2 reduced [2Fe-2S]-[ferredoxin] + 2 S-adenosyl-L-methionine = 2-methyladenosine(37) in tRNA + 5'-deoxyadenosine + L-methionine + 2 oxidized [2Fe-2S]-[ferredoxin] + S-adenosyl-L-homocysteine. Functionally, specifically methylates position 2 of adenine 2503 in 23S rRNA and position 2 of adenine 37 in tRNAs. m2A2503 modification seems to play a crucial role in the proofreading step occurring at the peptidyl transferase center and thus would serve to optimize ribosomal fidelity. This chain is Dual-specificity RNA methyltransferase RlmN, found in Methylococcus capsulatus (strain ATCC 33009 / NCIMB 11132 / Bath).